We begin with the raw amino-acid sequence, 95 residues long: DNA-directed RNA polymerase subunit Rpo6 (95 aa).

It belongs to the archaeal Rpo6/eukaryotic RPB6 RNA polymerase subunit family. In terms of assembly, part of the 13-subunit RNA polymerase complex.

It is found in the cytoplasm. It catalyses the reaction RNA(n) + a ribonucleoside 5'-triphosphate = RNA(n+1) + diphosphate. Functionally, DNA-dependent RNA polymerase (RNAP) catalyzes the transcription of DNA into RNA using the four ribonucleoside triphosphates as substrates. The sequence is that of DNA-directed RNA polymerase subunit Rpo6 from Saccharolobus solfataricus (strain ATCC 35092 / DSM 1617 / JCM 11322 / P2) (Sulfolobus solfataricus).